We begin with the raw amino-acid sequence, 80 residues long: Putative membrane protein insertion efficiency factor (80 aa).

The protein belongs to the UPF0161 family.

The protein resides in the cell membrane. Could be involved in insertion of integral membrane proteins into the membrane. This chain is Putative membrane protein insertion efficiency factor, found in Shouchella clausii (strain KSM-K16) (Alkalihalobacillus clausii).